The following is a 242-amino-acid chain: ATP synthase subunit b (242 aa).

The next 2 helical transmembrane spans lie at 8 to 28 and 87 to 107; these read VLPFLLVLLFAFAPLALASAP and LMDLFWRVLNFAVLMAILIKF.

The protein belongs to the ATPase B chain family. As to quaternary structure, F-type ATPases have 2 components, F(1) - the catalytic core - and F(0) - the membrane proton channel. F(1) has five subunits: alpha(3), beta(3), gamma(1), delta(1), epsilon(1). F(0) has three main subunits: a(1), b(2) and c(10-14). The alpha and beta chains form an alternating ring which encloses part of the gamma chain. F(1) is attached to F(0) by a central stalk formed by the gamma and epsilon chains, while a peripheral stalk is formed by the delta and b chains.

The protein localises to the cell inner membrane. F(1)F(0) ATP synthase produces ATP from ADP in the presence of a proton or sodium gradient. F-type ATPases consist of two structural domains, F(1) containing the extramembraneous catalytic core and F(0) containing the membrane proton channel, linked together by a central stalk and a peripheral stalk. During catalysis, ATP synthesis in the catalytic domain of F(1) is coupled via a rotary mechanism of the central stalk subunits to proton translocation. Its function is as follows. Component of the F(0) channel, it forms part of the peripheral stalk, linking F(1) to F(0). The sequence is that of ATP synthase subunit b from Desulfotalea psychrophila (strain LSv54 / DSM 12343).